The chain runs to 372 residues: NAD(P)H-quinone oxidoreductase subunit 1 (372 aa).

8 helical membrane-spanning segments follow: residues 27–47, 97–117, 128–148, 176–196, 204–224, 254–274, 308–328, and 347–367; these read VLWM…GVLV, FLFT…YLIV, VGAG…GLLM, LALA…IDIV, ILGW…IAAL, FALF…LVSI, ALGI…AILL, and FLLP…LTFP.

Belongs to the complex I subunit 1 family. In terms of assembly, NDH-1 is composed of at least 11 different subunits.

The protein resides in the cellular thylakoid membrane. The catalysed reaction is a plastoquinone + NADH + (n+1) H(+)(in) = a plastoquinol + NAD(+) + n H(+)(out). It catalyses the reaction a plastoquinone + NADPH + (n+1) H(+)(in) = a plastoquinol + NADP(+) + n H(+)(out). Functionally, NDH-1 shuttles electrons from an unknown electron donor, via FMN and iron-sulfur (Fe-S) centers, to quinones in the respiratory and/or the photosynthetic chain. The immediate electron acceptor for the enzyme in this species is believed to be plastoquinone. Couples the redox reaction to proton translocation, and thus conserves the redox energy in a proton gradient. This Synechococcus elongatus (strain ATCC 33912 / PCC 7942 / FACHB-805) (Anacystis nidulans R2) protein is NAD(P)H-quinone oxidoreductase subunit 1.